We begin with the raw amino-acid sequence, 147 residues long: MEKYNREEFEEVIVDIGRVTKVVKGGRRFRFTALVVVGNRNGLVGFGYGKAKEVPDAMRKAIDDAFKNIIHVKLKGSTIPHDVEVKYNASRILLRPASEGTGVIAGGGARPIIELAGIKDILTKSLGSNNSANVVRATIKALSLLKS.

One can recognise an S5 DRBM domain in the interval 9–72 (FEEVIVDIGR…DDAFKNIIHV (64 aa)).

It belongs to the universal ribosomal protein uS5 family. In terms of assembly, part of the 30S ribosomal subunit. Contacts proteins S4 and S8.

Functionally, with S4 and S12 plays an important role in translational accuracy. In terms of biological role, located at the back of the 30S subunit body where it stabilizes the conformation of the head with respect to the body. In Campylobacter curvus (strain 525.92), this protein is Small ribosomal subunit protein uS5.